Consider the following 208-residue polypeptide: MIRYCLTSYREDLVILDIINDSFSIVPDAGSLLKERDKLLKEFPQLSYFFDSEYHIGSVSRNSDTSFLEERWFLPEPDKTLYKCSLFKRFILLLKVFYYSWNIEKKGMAWIFISNKKENRLYSLNEEHLIRKEISNLSIIFHLNIFKSDCLTYSYALKRILNSRNIDAHLVIGVRTQPFYSHSWVEVGGQVINDAPNMRDKLSVIAEI.

The protein localises to the cytoplasm. Along with McjC, necessary and sufficient to process the inactive microcin J25 (McjA) precursor into the active peptide. The chain is Microcin J25-processing protein McjB (mcjB) from Escherichia coli.